The following is a 411-amino-acid chain: LL-diaminopimelate aminotransferase (411 aa).

Substrate is bound by residues tyrosine 15 and glycine 42. Pyridoxal 5'-phosphate contacts are provided by residues tyrosine 72, 108-109 (SK), tyrosine 132, asparagine 187, tyrosine 218, and 246-248 (SFS). Substrate contacts are provided by lysine 109, tyrosine 132, and asparagine 187. Lysine 249 carries the post-translational modification N6-(pyridoxal phosphate)lysine. The pyridoxal 5'-phosphate site is built by arginine 257 and asparagine 292. Positions 292 and 388 each coordinate substrate.

The protein belongs to the class-I pyridoxal-phosphate-dependent aminotransferase family. LL-diaminopimelate aminotransferase subfamily. Homodimer. Pyridoxal 5'-phosphate serves as cofactor.

The enzyme catalyses (2S,6S)-2,6-diaminopimelate + 2-oxoglutarate = (S)-2,3,4,5-tetrahydrodipicolinate + L-glutamate + H2O + H(+). Its pathway is amino-acid biosynthesis; L-lysine biosynthesis via DAP pathway; LL-2,6-diaminopimelate from (S)-tetrahydrodipicolinate (aminotransferase route): step 1/1. Involved in the synthesis of meso-diaminopimelate (m-DAP or DL-DAP), required for both lysine and peptidoglycan biosynthesis. Catalyzes the direct conversion of tetrahydrodipicolinate to LL-diaminopimelate. This is LL-diaminopimelate aminotransferase from Nostoc punctiforme (strain ATCC 29133 / PCC 73102).